The chain runs to 339 residues: Transmembrane protein 120B (339 aa).

Positions 1–77 form a coiled coil; sequence MSGQLERCER…ASREEAELVQ (77 aa). 6 helical membrane passes run 102–124, 132–152, 159–179, 187–207, 270–290, and 302–322; these read GLYL…AKFA, FKLY…FFLH, VFNF…SILI, GWWV…LTWP, FLLP…VTLF, and QVFV…LTTL.

The protein belongs to the TMEM120 family. In terms of assembly, heterooligomer with TMEM120A.

It is found in the nucleus inner membrane. Necessary for efficient adipogenesis. Does not show ion channel activity. The sequence is that of Transmembrane protein 120B (TMEM120B) from Bos taurus (Bovine).